Here is a 1789-residue protein sequence, read N- to C-terminus: Protein sprint (1789 aa).

Disordered regions lie at residues 53–120 (TTAN…AHPP), 140–190 (TTTA…DLAN), 218–237 (PLWN…HPTG), 261–317 (QRMH…QAGL), 329–378 (LNNN…DADD), and 401–460 (RRSR…PCDL). Residues 82-114 (SINNNKNNNISNKNNNNNNNNNNNINNNNNNNN) show a composition bias toward low complexity. Polar residues predominate over residues 140 to 149 (TTTANQLQQQ). Acidic residues predominate over residues 176–185 (PSEEDGDTDA). Polar residues predominate over residues 223 to 233 (RNGNGSTTTHC). Residues 295–317 (NNNNINNNHNGQQSQKSQQQAGL) are compositionally biased toward low complexity. The segment covering 337–361 (QPGSMTPASNRTGLDSNQNQKQNLN) has biased composition (polar residues). The span at 409-418 (QSRTSLVSSS) shows a compositional bias: low complexity. Acidic residues predominate over residues 428 to 445 (TSSEDDEEEPVEAEDEGE). Positions 473 to 566 (WFLPGIQRSG…ELPVQLMLPR (94 aa)) constitute an SH2 domain. Disordered regions lie at residues 632-689 (FFSD…SGGQ), 744-787 (TAPE…SANG), 852-918 (GECK…ILES), 969-1006 (DLLA…QSLL), 1040-1067 (AAED…QGSP), 1094-1123 (RSQM…MLQP), and 1138-1160 (PKPK…KRAR). The span at 639–649 (KPPPTGAPPLP) shows a compositional bias: pro residues. The span at 671-686 (TPSDTTNSSLSSFTTS) shows a compositional bias: low complexity. Over residues 857-868 (TLSSQGSSSNDS) the composition is skewed to polar residues. Over residues 903 to 914 (AGKESQHYKESD) the composition is skewed to basic and acidic residues. Positions 974–984 (TPSTPTPTQQS) are enriched in low complexity. Polar residues-rich tracts occupy residues 994 to 1006 (TATP…QSLL) and 1048 to 1065 (TTPT…SKQG). Residues 1143–1154 (SQQQQQSQQQQQ) are compositionally biased toward low complexity. The VPS9 domain maps to 1531–1673 (RSEDIQLLAQ…LKTFMASEGE (143 aa)). The 89-residue stretch at 1689–1777 (CSSVLRVIIP…CMLAYKRIDA (89 aa)) folds into the Ras-associating domain.

This sequence belongs to the RIN (Ras interaction/interference) family. In terms of tissue distribution, in late cellular blastoderm embryos, it is expressed in the posterior end. Then, as development proceeds, it is expressed in the developing midgut, amnioserosa and in a specific subset of CNS neurons. Isoform 1 is expressed earlier in developing midgut and amnioserosa, but is not expressed in the CNS.

Functionally, potential Ras effector protein. May function as a guanine nucleotide exchange (GEF), by exchanging bound GDP for free GTP. The chain is Protein sprint (spri) from Drosophila melanogaster (Fruit fly).